The chain runs to 272 residues: Putative bark agglutinin LECRPA3 (272 aa).

The signal sequence occupies residues 1–29; sequence PFNPETVYALLAMLISFFVLLASARKENS. 3 N-linked (GlcNAc...) asparagine glycosylation sites follow: Asn36, Asn39, and Asn65. Residues Glu150 and Asp152 each contribute to the Mn(2+) site. Ca(2+)-binding residues include Asp152, Tyr154, Asn156, and Asp159. Residues Asp159 and His164 each contribute to the Mn(2+) site.

This sequence belongs to the leguminous lectin family. In terms of assembly, homotetramer. Weak expression in bark. The lectin accumulates in the inner bark in autumn.

Functionally, bark lectins are storage proteins that probably maintain stocks of nitrogen during dormant period. Self-aggregatable molecules that can bind their own carbohydrate side chains. They could also play a role in the plant's defense against phytophagous invertebrates or herbivorous higher animals. The chain is Putative bark agglutinin LECRPA3 from Robinia pseudoacacia (Black locust).